The following is a 122-amino-acid chain: Large ribosomal subunit protein uL14 (122 aa).

This sequence belongs to the universal ribosomal protein uL14 family. As to quaternary structure, part of the 50S ribosomal subunit. Forms a cluster with proteins L3 and L19. In the 70S ribosome, L14 and L19 interact and together make contacts with the 16S rRNA in bridges B5 and B8.

Its function is as follows. Binds to 23S rRNA. Forms part of two intersubunit bridges in the 70S ribosome. The chain is Large ribosomal subunit protein uL14 from Shewanella sp. (strain ANA-3).